We begin with the raw amino-acid sequence, 220 residues long: Orotate phosphoribosyltransferase (220 aa).

Lys-26 contributes to the 5-phospho-alpha-D-ribose 1-diphosphate binding site. 34-35 (FF) serves as a coordination point for orotate. 5-phospho-alpha-D-ribose 1-diphosphate contacts are provided by residues 72–73 (YK), Arg-99, Lys-100, Lys-103, His-105, and 125–133 (DDVISAGTS). Residues Ser-129 and Arg-157 each coordinate orotate.

This sequence belongs to the purine/pyrimidine phosphoribosyltransferase family. PyrE subfamily. Homodimer. The cofactor is Mg(2+).

The enzyme catalyses orotidine 5'-phosphate + diphosphate = orotate + 5-phospho-alpha-D-ribose 1-diphosphate. It functions in the pathway pyrimidine metabolism; UMP biosynthesis via de novo pathway; UMP from orotate: step 1/2. Catalyzes the transfer of a ribosyl phosphate group from 5-phosphoribose 1-diphosphate to orotate, leading to the formation of orotidine monophosphate (OMP). The protein is Orotate phosphoribosyltransferase of Nitrosococcus oceani (strain ATCC 19707 / BCRC 17464 / JCM 30415 / NCIMB 11848 / C-107).